Here is a 294-residue protein sequence, read N- to C-terminus: Probable WRKY transcription factor 70 (294 aa).

The disordered stretch occupies residues 72-94 (SQNASCDNDGKFEDSGDSRKRLG). The span at 79-91 (NDGKFEDSGDSRK) shows a compositional bias: basic and acidic residues. The Nuclear localization signal signature appears at 90-97 (RKRLGPVK). Residues 114–182 (IESTILEDAF…YIGNHTCNTN (69 aa)) constitute a DNA-binding region (WRKY). The disordered stretch occupies residues 201–229 (SEDHKSPSLSTSMKEEDNPHRHHGSSTEN).

This sequence belongs to the WRKY group III family. Interacts with WRKY30. Binds to BZR2/BES1 to cooperatively regulate the expression of target genes. Binds to unmodified (i.e. not sumoylated) NPR1. In terms of processing, phosphorylated and destabilized by ASK7/BIN2. Expressed in leaves and flowers.

The protein resides in the nucleus. In terms of biological role, transcription factor involved in senescence, biotic and abiotic stress responses by modulating various phytohormones signaling pathways. Interacts specifically with the W box (5'-(T)TGAC[CT]-3'), a frequently occurring elicitor-responsive cis-acting element. Binds to the 5'-[CT]GACTTTT-3' motif in promoters of target genes to induce their expression. Binding to the W-box element of PR-1 promoter is mediated by not-sumoylated NPR1 in the absence of salicylic acid. Plays an important but not indispensable role in jasmonate and salicylic acid signaling. Positively regulates the salicylic acid (SA)-mediated signal pathway, but negatively the jasmonic acid (JA)-mediated signal pathway, thus determining the balance between these mutually antagonistic pathways. Together with WRKY46, WRKY53 and WRKY54, prevents defense response to the necrotrophic pathogens P.carotovorum and B.cinerea, but promotes defense responses (including SA-induced pathogenesis-related (PR) genes expression) against biotrophic/hemibiotrophic SA-monitored pathogens (e.g. P.syringae, E.carotovora subsp. carotovora SCC3193 and E.cichoracearum), probably by regulating negatively the JA/ET and positively the SA signaling pathways. Contributes to the suppression of jasmonic acid (MeJA)-induced expression of JA-responsive genes (e.g. PDF1.2). Promotes susceptibility to JA-monitored pathogens (e.g. A.brassicicola), probably by facilitating SA-controlled suppression of JA-mediated defense. Represses the biosynthesis of the phytoalexin camalexin and indol-3-ylmethyl glucosinolate (IGS). Represses both SA and JA/ethylene (ET) mediated defense marker genes expression. Negative regulator of SA biosynthesis. Negative regulator of EDS1-dependent defense against E.amylovora. Required for RPP4-mediated disease resistance and basal defense against H.parasitica, probably via late up-regulation (LURP) of resistance genes (e.g. CML10/CaBP22 and LURP1). Probably involved in defense responses toward insects (e.g. P.xylostella and B.brassicae). Together with WRKY54, negative regulator of developmental senescence, probably via the regulation of several senescence-associated markers genes. Together with WRKY46 and WRKY54, promotes brassinosteroid (BR)-regulated plant growth but prevent drought response by modulating gene expression. In collaboration with WRKY54, prevents stomatal closure and, consequently, osmotic stress tolerance. Regulates rhizobacterium B.cereus AR156-induced systemic resistance (ISR) to P.syringae pv. tomato DC3000. This chain is Probable WRKY transcription factor 70, found in Arabidopsis thaliana (Mouse-ear cress).